A 313-amino-acid chain; its full sequence is Ornithine carbamoyltransferase (313 aa).

Residues 57-60 (STRT), Q84, R108, and 135-138 (HPTQ) each bind carbamoyl phosphate. L-ornithine-binding positions include N167, D231, and 235–236 (SM). Residues 272-273 (CL) and R300 each bind carbamoyl phosphate.

It belongs to the aspartate/ornithine carbamoyltransferase superfamily. OTCase family.

The protein localises to the cytoplasm. It catalyses the reaction carbamoyl phosphate + L-ornithine = L-citrulline + phosphate + H(+). It participates in amino-acid biosynthesis; L-arginine biosynthesis; L-arginine from L-ornithine and carbamoyl phosphate: step 1/3. Reversibly catalyzes the transfer of the carbamoyl group from carbamoyl phosphate (CP) to the N(epsilon) atom of ornithine (ORN) to produce L-citrulline. The sequence is that of Ornithine carbamoyltransferase from Caldanaerobacter subterraneus subsp. tengcongensis (strain DSM 15242 / JCM 11007 / NBRC 100824 / MB4) (Thermoanaerobacter tengcongensis).